We begin with the raw amino-acid sequence, 96 residues long: Large ribosomal subunit protein bL28 (96 aa).

Positions 1 to 22 (MSRSCELTGKGVQSGNNVSHAN) are enriched in polar residues. A disordered region spans residues 1–24 (MSRSCELTGKGVQSGNNVSHANNK).

The protein belongs to the bacterial ribosomal protein bL28 family.

This Rhizobium meliloti (strain 1021) (Ensifer meliloti) protein is Large ribosomal subunit protein bL28.